The following is a 479-amino-acid chain: Envelope glycoprotein C homolog (479 aa).

The first 22 residues, 1–22, serve as a signal peptide directing secretion; it reads MASLARAMLALLALYAAAIAAA. Topologically, residues 23 to 451 are virion surface; sequence PSTTTALDTT…SVSWPVVSSM (429 aa). A disordered region spans residues 26-96; the sequence is TTALDTTPNG…RVHGDKATAH (71 aa). The N-linked (GlcNAc...) asparagine; by host glycan is linked to Asn-40. Over residues 48–57 the composition is skewed to pro residues; the sequence is PSPPPTPAPA. The segment at 75–82 is HDB1; the sequence is SRRKPPRN. Positions 75–87 are enriched in basic residues; the sequence is SRRKPPRNNNRTR. An N-linked (GlcNAc...) asparagine; by host glycan is attached at Asn-84. Residues 95 to 101 form an HDB2 region; sequence AHGRKRI. The cysteines at positions 103 and 120 are disulfide-linked. Residues 135-140 form an HDB3 region; it reads YRRGRF. Asn-169, Asn-192, Asn-220, Asn-228, Asn-285, and Asn-302 each carry an N-linked (GlcNAc...) asparagine; by host glycan. 3 disulfide bridges follow: Cys-256–Cys-326, Cys-365–Cys-418, and Cys-369–Cys-392. The helical transmembrane segment at 452–472 threads the bilayer; sequence IVVIAGIGILAIVLVIMATCV. Over 473-479 the chain is Cytoplasmic; sequence YYRQAGP.

Belongs to the herpesviridae glycoprotein C family. As to quaternary structure, interacts with host complement component C3; this interaction inhibits host immune response by disregulating complement cascade.

It localises to the virion membrane. Functionally, essential for the initial attachment to heparan sulfate moieties of the host cell surface proteoglycans. Plays also a role in host immune evasion by inhibiting the host complement cascade activation. In Suid herpesvirus 1 (strain Indiana-Funkhauser / Becker) (SuHV-1), this protein is Envelope glycoprotein C homolog (gC).